The chain runs to 146 residues: Large-conductance mechanosensitive channel (146 aa).

The next 2 membrane-spanning stretches (helical) occupy residues 12–32 and 83–103; these read AFAM…GGAF and GNFL…FLFI.

Belongs to the MscL family. In terms of assembly, homopentamer.

The protein resides in the cell inner membrane. Channel that opens in response to stretch forces in the membrane lipid bilayer. May participate in the regulation of osmotic pressure changes within the cell. This is Large-conductance mechanosensitive channel from Phocaeicola vulgatus (strain ATCC 8482 / DSM 1447 / JCM 5826 / CCUG 4940 / NBRC 14291 / NCTC 11154) (Bacteroides vulgatus).